The primary structure comprises 331 residues: ATP-dependent 6-phosphofructokinase (331 aa).

Glycine 12 is an ATP binding site. Residues 22–26 (RGVVR) and 55–60 (RYSVSD) contribute to the ADP site. ATP is bound by residues 73–74 (RF) and 103–106 (GDGS). Mg(2+) is bound at residue aspartate 104. 127–129 (TID) provides a ligand contact to substrate. Residue aspartate 129 is the Proton acceptor of the active site. Residue arginine 156 participates in ADP binding. Substrate contacts are provided by residues arginine 164 and 171–173 (MGR). ADP is bound by residues 187–189 (GCE), lysine 213, and 215–217 (KKH). Substrate-binding positions include glutamate 224, arginine 245, and 251–254 (HIQR).

It belongs to the phosphofructokinase type A (PFKA) family. ATP-dependent PFK group I subfamily. Prokaryotic clade 'B1' sub-subfamily. Homotetramer. It depends on Mg(2+) as a cofactor.

It localises to the cytoplasm. The enzyme catalyses beta-D-fructose 6-phosphate + ATP = beta-D-fructose 1,6-bisphosphate + ADP + H(+). It participates in carbohydrate degradation; glycolysis; D-glyceraldehyde 3-phosphate and glycerone phosphate from D-glucose: step 3/4. Allosterically activated by ADP and other diphosphonucleosides, and allosterically inhibited by phosphoenolpyruvate. Catalyzes the phosphorylation of D-fructose 6-phosphate to fructose 1,6-bisphosphate by ATP, the first committing step of glycolysis. The polypeptide is ATP-dependent 6-phosphofructokinase (Yersinia enterocolitica serotype O:8 / biotype 1B (strain NCTC 13174 / 8081)).